The primary structure comprises 254 residues: 3-deoxy-manno-octulosonate cytidylyltransferase (254 aa).

The protein belongs to the KdsB family.

The protein resides in the cytoplasm. The enzyme catalyses 3-deoxy-alpha-D-manno-oct-2-ulosonate + CTP = CMP-3-deoxy-beta-D-manno-octulosonate + diphosphate. Its pathway is nucleotide-sugar biosynthesis; CMP-3-deoxy-D-manno-octulosonate biosynthesis; CMP-3-deoxy-D-manno-octulosonate from 3-deoxy-D-manno-octulosonate and CTP: step 1/1. The protein operates within bacterial outer membrane biogenesis; lipopolysaccharide biosynthesis. Activates KDO (a required 8-carbon sugar) for incorporation into bacterial lipopolysaccharide in Gram-negative bacteria. This chain is 3-deoxy-manno-octulosonate cytidylyltransferase, found in Geobacter metallireducens (strain ATCC 53774 / DSM 7210 / GS-15).